The primary structure comprises 463 residues: Lipase 5 (463 aa).

Positions 1-14 are cleaved as a signal peptide; it reads MLYLILFLIAPIYA. Cys-110 and Cys-281 are joined by a disulfide. Ser-194 serves as the catalytic Charge relay system. Asn-229 carries N-linked (GlcNAc...) asparagine glycosylation. Catalysis depends on charge relay system residues Asp-343 and His-376. Cys-359 and Cys-404 are oxidised to a cystine.

It belongs to the AB hydrolase superfamily. Lipase family. Class Lip subfamily.

The protein resides in the secreted. It catalyses the reaction a triacylglycerol + H2O = a diacylglycerol + a fatty acid + H(+). Fe(2)+, Fe(3+), Hg(2+) as well as ethylenediaminetetraacetic acid (EDTA) and phenylmethanesulfonyl fluoride (PMSF) strongly inhibit the lipase activity. Surfactants such as Tween 20, Tween 80 and TritonX-100 show also inhibitory effect in the lipase activity. Sodium dodecyl sulfate (SDS) sharply decreases the lipase activity by 85%. Methanol, ethanol, and acetone have also negative effect on the lipase activity, with residual activities at 48%, 24% and 44% respectively. Finally, lipase activity is almost lost in the presence of isopropanol alcohol. In terms of biological role, secreted lipase that is able to hydrolyze both the neutral triacylglycerols and the monopalmitate ester Tween 40, allowing the use of hydrolyzed products as carbon sources. Exhibits a preference for the short and medium chain length p-NP (C4 and C8 acyl group) esters rather than the long chain length p-NP esters (C12, C16 and C18 acyl group). Has broad lipolytic activity, which may be important for colonization and subsequent infection, therefore contributing to the persistence and virulence in human tissue. The chain is Lipase 5 from Candida albicans (strain SC5314 / ATCC MYA-2876) (Yeast).